A 281-amino-acid polypeptide reads, in one-letter code: Acidic leucine-rich nuclear phosphoprotein 32-related protein (281 aa).

LRR repeat units lie at residues 29-52 (YESL…EKEL), 56-78 (FKNL…IPSI), 79-103 (ATLN…IVQN), and 105-128 (PNIK…TLKE). One can recognise an LRRCT domain in the interval 140–178 (NPFADNPNYRKELFEFLPNVKIIDCYNKEGMEVLSSDEE). Residues 197–244 (FKDEDDEDEEFVPNDNEDDDEDDELDDDLEDEDMEDLDKEDLDKEDYD) show a composition bias toward acidic residues. The segment at 197-281 (FKDEDDEDEE…DMDLKKTKLE (85 aa)) is disordered. Over residues 245-266 (IDTKETEGVNKDEKSNKRKQDA) the composition is skewed to basic and acidic residues.

Belongs to the ANP32 family.

The protein is Acidic leucine-rich nuclear phosphoprotein 32-related protein of Plasmodium falciparum (isolate 3D7).